The primary structure comprises 126 residues: C2H2-type zinc-finger transcription factor M5 (126 aa).

Disordered stretches follow at residues Ala17–Arg52 and Glu103–Asp126. A compositionally biased stretch (polar residues) spans Ser38–Asp48. The C2H2-type 1; degenerate zinc-finger motif lies at Asn51–Asn76. A C2H2-type 2; degenerate zinc finger spans residues Phe83–Asn115. Over residues Asn115–Asp126 the composition is skewed to basic and acidic residues.

It belongs to the GLI C2H2-type zinc-finger protein family.

It localises to the nucleus. Functionally, transcription factor that probably regulates the expression of the gene cluster that mediates the biosynthesis of squalestatin S1 (SQS1, also known as zaragozic acid A), a heavily oxidized fungal polyketide that offers potent cholesterol lowering activity by targeting squalene synthase (SS). In Phoma sp. (strain ATCC 20986 / MF5453), this protein is C2H2-type zinc-finger transcription factor M5.